Here is a 620-residue protein sequence, read N- to C-terminus: 1-deoxy-D-xylulose-5-phosphate synthase (620 aa).

Thiamine diphosphate-binding positions include His-80 and Gly-121 to Ser-123. Asp-152 is a Mg(2+) binding site. Thiamine diphosphate contacts are provided by residues Gly-153 to Ala-154, Asn-181, Tyr-288, and Glu-370. Residue Asn-181 participates in Mg(2+) binding.

The protein belongs to the transketolase family. DXPS subfamily. In terms of assembly, homodimer. Requires Mg(2+) as cofactor. The cofactor is thiamine diphosphate.

It catalyses the reaction D-glyceraldehyde 3-phosphate + pyruvate + H(+) = 1-deoxy-D-xylulose 5-phosphate + CO2. The protein operates within metabolic intermediate biosynthesis; 1-deoxy-D-xylulose 5-phosphate biosynthesis; 1-deoxy-D-xylulose 5-phosphate from D-glyceraldehyde 3-phosphate and pyruvate: step 1/1. Functionally, catalyzes the acyloin condensation reaction between C atoms 2 and 3 of pyruvate and glyceraldehyde 3-phosphate to yield 1-deoxy-D-xylulose-5-phosphate (DXP). The chain is 1-deoxy-D-xylulose-5-phosphate synthase from Salmonella typhi.